A 324-amino-acid chain; its full sequence is Geranylgeranyl diphosphate synthase (324 aa).

The isopentenyl diphosphate site is built by Lys-46, Arg-49, and His-78. Mg(2+) contacts are provided by Asp-85 and Asp-89. Residue Arg-94 participates in an all-trans-polyprenyl diphosphate binding. Arg-95 is a binding site for isopentenyl diphosphate. Residues Lys-176, Thr-177, Gln-214, Lys-231, and Lys-241 each contribute to the an all-trans-polyprenyl diphosphate site.

The protein belongs to the FPP/GGPP synthase family. Mg(2+) serves as cofactor.

It catalyses the reaction isopentenyl diphosphate + (2E,6E)-farnesyl diphosphate = (2E,6E,10E)-geranylgeranyl diphosphate + diphosphate. It functions in the pathway isoprenoid biosynthesis; geranylgeranyl diphosphate biosynthesis; geranylgeranyl diphosphate from farnesyl diphosphate and isopentenyl diphosphate: step 1/1. Catalyzes the sequential condensation of isopentenyl pyrophosphate with the allylic pyrophosphates to yield geranylgeranyl diphosphate (GGPP) which is a precursor of the ether-linked lipids. The sequence is that of Geranylgeranyl diphosphate synthase from Methanosarcina mazei (strain ATCC BAA-159 / DSM 3647 / Goe1 / Go1 / JCM 11833 / OCM 88) (Methanosarcina frisia).